Consider the following 213-residue polypeptide: uncharacterized protein (213 aa).

Active-site charge relay system residues include Ser114, Asp162, and His194.

The protein belongs to the AB hydrolase superfamily. AB hydrolase 2 family.

This is an uncharacterized protein from Rickettsia bellii (strain RML369-C).